The sequence spans 187 residues: ATP synthase subunit b, chloroplastic (187 aa).

The helical transmembrane segment at 34–56 (IINLSVVLGLVFTLGRNFLISLL) threads the bilayer.

The protein belongs to the ATPase B chain family. As to quaternary structure, F-type ATPases have 2 components, F(1) - the catalytic core - and F(0) - the membrane proton channel. F(1) has five subunits: alpha(3), beta(3), gamma(1), delta(1), epsilon(1). F(0) has four main subunits: a(1), b(1), b'(1) and c(10-14). The alpha and beta chains form an alternating ring which encloses part of the gamma chain. F(1) is attached to F(0) by a central stalk formed by the gamma and epsilon chains, while a peripheral stalk is formed by the delta, b and b' chains.

Its subcellular location is the plastid. The protein resides in the chloroplast thylakoid membrane. In terms of biological role, f(1)F(0) ATP synthase produces ATP from ADP in the presence of a proton or sodium gradient. F-type ATPases consist of two structural domains, F(1) containing the extramembraneous catalytic core and F(0) containing the membrane proton channel, linked together by a central stalk and a peripheral stalk. During catalysis, ATP synthesis in the catalytic domain of F(1) is coupled via a rotary mechanism of the central stalk subunits to proton translocation. Functionally, component of the F(0) channel, it forms part of the peripheral stalk, linking F(1) to F(0). The sequence is that of ATP synthase subunit b, chloroplastic from Pleurastrum terricola (Filamentous green alga).